The sequence spans 518 residues: D-aminopeptidase (518 aa).

S62 serves as the catalytic Nucleophile. The Proton donor/acceptor role is filled by K65. The disordered stretch occupies residues 373 to 392; sequence FGTGPEKMDISGENEAQSSM. Positions 477 to 487 are important for specificity; the sequence is QRSMDAPSPGE. D481 contacts substrate.

This sequence belongs to the peptidase S12 family. As to quaternary structure, homodimer.

The catalysed reaction is Release of an N-terminal D-amino acid from a peptide, Xaa-|-Yaa-, in which Xaa is preferably D-Ala, D-Ser or D-Thr. D-amino acid amides and methyl esters also are hydrolyzed, as is glycine amide.. With respect to regulation, inhibited by beta-lactam compounds such as 6-aminopenicillic acid, 7-aminocephalosporanic acid, benzylpenicillin and ampicillin. Inhibited by p-chloromercuribenzoate. Functionally, hydrolyzes N-terminal residues in D-amino acid-containing peptides. The polypeptide is D-aminopeptidase (Brucella melitensis biotype 2 (strain ATCC 23457)).